Reading from the N-terminus, the 623-residue chain is Interleukin-27 receptor subunit alpha (623 aa).

The signal sequence occupies residues 1 to 24; that stretch reads MNRLRVARLTPLELLLSLMSLLLG. At 25–510 the chain is on the extracellular side; it reads TRPHGSPGPL…HLPDNRIRWK (486 aa). 2 Fibronectin type-III domains span residues 30–124 and 125–225; these read SPGP…MKPD and TPQI…TPFL. The N-linked (GlcNAc...) asparagine glycan is linked to Asn46. The WSXWS motif signature appears at 211–215; sequence WGEWS. N-linked (GlcNAc...) asparagine glycosylation is found at Asn296, Asn305, Asn360, Asn368, and Asn461. Fibronectin type-III domains are found at residues 316 to 412 and 413 to 505; these read APCD…VPLA and GPAV…LPDN. A helical transmembrane segment spans residues 511-531; that stretch reads ALPWFLSLWGLLLMGCGLSLA. The Cytoplasmic segment spans residues 532 to 623; that stretch reads STRCLQARCL…PTPEELGLLV (92 aa). The Box 1 motif motif lies at 552–560; that stretch reads IWERVPDPA.

It belongs to the type I cytokine receptor family. Type 2 subfamily. Expressed in CD4+ and CD8+ T-cells, B-cells, natural killer cells and macrophages. Highest levels in CD4+ T-cells and natural killer cells. Expression highest in Th0 cells.

It localises to the membrane. In terms of biological role, receptor for IL27. Requires IL6ST/GP130 to mediate signal transduction in response to IL27. This signaling system acts through STAT3 and STAT1. Involved in the regulation of Th1-type immune responses. Also appears to be involved in innate defense mechanisms. This Mus musculus (Mouse) protein is Interleukin-27 receptor subunit alpha (Il27ra).